The following is a 314-amino-acid chain: MTEAQLTLPTTKLSPTQKTQFIKLEKKLRRNVGQAIAQYNMIEDGDKVMVCLSGGKDSYAMLSILMLLKESAPIHFDIIAVNLDQKQPGFPEHILPEYLDKLGIEYHIVEEDTYGIVKEKVPEGKTTCSLCSRLRRAVLYKAAKKIGATKIALGHHRDDMIETLMLNMFYGGKMKAMPAKLVSDNGEHVVIRPLAFCKESELIQYSELKHFPIIPCNLCGSQPNMQRQNIKRMLNDWHDQFPGRIESMFTAMQNVVPSHLCDSNLFDFKSINSTSGIINGGDTAFDEVAIEAPQDLSMKNQPNADQLLNVVEVK.

The short motif at 53-58 (SGGKDS) is the PP-loop motif element. Residues Cys-128, Cys-131, and Cys-219 each contribute to the [4Fe-4S] cluster site.

It belongs to the TtcA family. In terms of assembly, homodimer. Mg(2+) serves as cofactor. Requires [4Fe-4S] cluster as cofactor.

It localises to the cytoplasm. The catalysed reaction is cytidine(32) in tRNA + S-sulfanyl-L-cysteinyl-[cysteine desulfurase] + AH2 + ATP = 2-thiocytidine(32) in tRNA + L-cysteinyl-[cysteine desulfurase] + A + AMP + diphosphate + H(+). It functions in the pathway tRNA modification. In terms of biological role, catalyzes the ATP-dependent 2-thiolation of cytidine in position 32 of tRNA, to form 2-thiocytidine (s(2)C32). The sulfur atoms are provided by the cysteine/cysteine desulfurase (IscS) system. In Colwellia psychrerythraea (strain 34H / ATCC BAA-681) (Vibrio psychroerythus), this protein is tRNA-cytidine(32) 2-sulfurtransferase.